We begin with the raw amino-acid sequence, 645 residues long: Crossover junction endonuclease mus-81 (645 aa).

Disordered stretches follow at residues 98-119 (LAAA…RTAR) and 219-310 (GVAG…EDRK). Residues 223–252 (SANTSRNAIASGSGTSNPNRSENVNPNRQD) are compositionally biased toward polar residues. The segment covering 296–305 (DSDDEDPKYD) has biased composition (acidic residues). Residues 353–459 (ELVLDTREVQ…NVVYIIENYN (107 aa)) form the ERCC4 domain.

Belongs to the XPF family. Interacts with eme-1. The cofactor is Mg(2+).

Its subcellular location is the nucleus. Interacts with eme-1 to form a DNA structure-specific endonuclease with substrate preference for branched DNA structures with a 5'-end at the branch nick. Typical substrates include 3'-flap structures, D-loops, replication forks and nicked Holliday junctions. May be required in mitosis for the processing of stalled or collapsed replication fork intermediates. May be required in meiosis for the repair of meiosis-specific double strand breaks subsequent to single-end invasion (SEI). This is Crossover junction endonuclease mus-81 (mus-81) from Neurospora crassa (strain ATCC 24698 / 74-OR23-1A / CBS 708.71 / DSM 1257 / FGSC 987).